Consider the following 232-residue polypeptide: Phosphatidylserine decarboxylase proenzyme (232 aa).

Residue S190 is the Schiff-base intermediate with substrate; via pyruvic acid of the active site. S190 bears the Pyruvic acid (Ser); by autocatalysis mark.

It belongs to the phosphatidylserine decarboxylase family. PSD-A subfamily. Heterodimer of a large membrane-associated beta subunit and a small pyruvoyl-containing alpha subunit. Pyruvate serves as cofactor. In terms of processing, is synthesized initially as an inactive proenzyme. Formation of the active enzyme involves a self-maturation process in which the active site pyruvoyl group is generated from an internal serine residue via an autocatalytic post-translational modification. Two non-identical subunits are generated from the proenzyme in this reaction, and the pyruvate is formed at the N-terminus of the alpha chain, which is derived from the carboxyl end of the proenzyme. The post-translation cleavage follows an unusual pathway, termed non-hydrolytic serinolysis, in which the side chain hydroxyl group of the serine supplies its oxygen atom to form the C-terminus of the beta chain, while the remainder of the serine residue undergoes an oxidative deamination to produce ammonia and the pyruvoyl prosthetic group on the alpha chain.

The protein resides in the cell membrane. It carries out the reaction a 1,2-diacyl-sn-glycero-3-phospho-L-serine + H(+) = a 1,2-diacyl-sn-glycero-3-phosphoethanolamine + CO2. Its pathway is phospholipid metabolism; phosphatidylethanolamine biosynthesis; phosphatidylethanolamine from CDP-diacylglycerol: step 2/2. Catalyzes the formation of phosphatidylethanolamine (PtdEtn) from phosphatidylserine (PtdSer). The protein is Phosphatidylserine decarboxylase proenzyme of Bartonella bacilliformis (strain ATCC 35685 / KC583 / Herrer 020/F12,63).